A 358-amino-acid polypeptide reads, in one-letter code: S-adenosylmethionine decarboxylase proenzyme (358 aa).

Active-site residues include Glu11 and Glu14. Residue Ser71 is the Schiff-base intermediate with substrate; via pyruvic acid of the active site. Ser71 bears the Pyruvic acid (Ser); by autocatalysis mark. The active-site Proton donor; for catalytic activity is Cys85. Residues Ser234 and His247 each act as proton acceptor; for processing activity in the active site.

Belongs to the eukaryotic AdoMetDC family. Pyruvate is required as a cofactor. In terms of processing, is synthesized initially as an inactive proenzyme. Formation of the active enzyme involves a self-maturation process in which the active site pyruvoyl group is generated from an internal serine residue via an autocatalytic post-translational modification. Two non-identical subunits are generated from the proenzyme in this reaction, and the pyruvate is formed at the N-terminus of the alpha chain, which is derived from the carboxyl end of the proenzyme. The post-translation cleavage follows an unusual pathway, termed non-hydrolytic serinolysis, in which the side chain hydroxyl group of the serine supplies its oxygen atom to form the C-terminus of the beta chain, while the remainder of the serine residue undergoes an oxidative deamination to produce ammonia and the pyruvoyl group blocking the N-terminus of the alpha chain.

The enzyme catalyses S-adenosyl-L-methionine + H(+) = S-adenosyl 3-(methylsulfanyl)propylamine + CO2. It participates in amine and polyamine biosynthesis; S-adenosylmethioninamine biosynthesis; S-adenosylmethioninamine from S-adenosyl-L-methionine: step 1/1. In Solanum chilense (Tomato), this protein is S-adenosylmethionine decarboxylase proenzyme (SAMDC).